A 440-amino-acid chain; its full sequence is Trigger factor (440 aa).

The PPIase FKBP-type domain maps to 163–248 (NDTVSINFKG…INSIKEKVLP (86 aa)).

This sequence belongs to the FKBP-type PPIase family. Tig subfamily.

The protein localises to the cytoplasm. It carries out the reaction [protein]-peptidylproline (omega=180) = [protein]-peptidylproline (omega=0). Involved in protein export. Acts as a chaperone by maintaining the newly synthesized protein in an open conformation. Functions as a peptidyl-prolyl cis-trans isomerase. The sequence is that of Trigger factor from Finegoldia magna (strain ATCC 29328 / DSM 20472 / WAL 2508) (Peptostreptococcus magnus).